A 169-amino-acid chain; its full sequence is Macro domain-containing protein SCO6450 (169 aa).

The 169-residue stretch at 1 to 169 (MTGITLVQGD…AYEAFAARLG (169 aa)) folds into the Macro domain.

Belongs to the MacroD-type family.

The protein is Macro domain-containing protein SCO6450 of Streptomyces coelicolor (strain ATCC BAA-471 / A3(2) / M145).